Consider the following 243-residue polypeptide: Ras-related protein Rab-12 (243 aa).

Residue methionine 1 is modified to N-acetylmethionine. The segment at 1–36 (MDPSAALHRRPAGGSLGAVSPALSGGQARRRKQPPR) is disordered. A phosphoserine mark is found at serine 15, serine 20, and serine 24. Residues glycine 51, valine 52, glycine 53, lysine 54, threonine 55, serine 72, and threonine 73 each coordinate GTP. Threonine 55 lines the Mg(2+) pocket. Short sequence motifs (switch) lie at residues 64 to 78 (DTFCEACKSTVGVDF) and 96 to 113 (DTAGQERFNSITSAYYRS). 2 residues coordinate Mg(2+): threonine 73 and aspartate 96. Glycine 99 contributes to the GTP binding site. Serine 105 carries the post-translational modification Phosphoserine; by LRRK2. GTP contacts are provided by asparagine 154, lysine 155, aspartate 157, serine 185, alanine 186, and lysine 187. 2 S-geranylgeranyl cysteine lipidation sites follow: cysteine 242 and cysteine 243.

This sequence belongs to the small GTPase superfamily. Rab family. Interacts with RABIF and OPTN. Interacts with LRRK2; interaction facilitates phosphorylation of Ser-105. Interacts with GDI1, GDI2, CHM and CHML; these interactions are disrupted by phosphorylation on Ser-105. Interacts with RILPL1 and RILPL2; these interactions are dependent on phosphorylation of Ser-105. Mg(2+) is required as a cofactor. In terms of processing, phosphorylation of Ser-105 in the switch II region by LRRK2 prevents the association of RAB regulatory proteins, including CHM, CHML and RAB GDP dissociation inhibitors GDI1 and GDI2. As to expression, ubiquitously expressed.

It localises to the recycling endosome membrane. It is found in the lysosome membrane. The protein localises to the golgi apparatus membrane. Its subcellular location is the cytoplasmic vesicle. The protein resides in the autophagosome. It catalyses the reaction GTP + H2O = GDP + phosphate + H(+). With respect to regulation, regulated by guanine nucleotide exchange factors (GEFs) including DENND3 which promote the exchange of bound GDP for free GTP. Regulated by GTPase activating proteins (GAPs) which increase the GTP hydrolysis activity. Inhibited by GDP dissociation inhibitors (GDIs). In terms of biological role, the small GTPases Rab are key regulators of intracellular membrane trafficking, from the formation of transport vesicles to their fusion with membranes. Rabs cycle between an inactive GDP-bound form and an active GTP-bound form that is able to recruit to membranes different set of downstream effectors directly responsible for vesicle formation, movement, tethering and fusion. RAB12 may play a role in protein transport from recycling endosomes to lysosomes regulating, for instance, the degradation of the transferrin receptor. Involved in autophagy. The sequence is that of Ras-related protein Rab-12 from Mus musculus (Mouse).